Consider the following 128-residue polypeptide: MEVVNALGRRKRAIARVFVSEGTGKITINKRDLAEYFPSTILQYVVKQPLNKLGAAEKYDIKVNLCGGGFTGQSQALRLAIARALIKMNAEDKAALRAEGFMTRDPRSVERKKPGQPKARRRFQFSKR.

The disordered stretch occupies residues 105-128 (DPRSVERKKPGQPKARRRFQFSKR). The segment covering 114 to 128 (PGQPKARRRFQFSKR) has biased composition (basic residues).

The protein belongs to the universal ribosomal protein uS9 family.

The polypeptide is Small ribosomal subunit protein uS9 (Bacteroides thetaiotaomicron (strain ATCC 29148 / DSM 2079 / JCM 5827 / CCUG 10774 / NCTC 10582 / VPI-5482 / E50)).